We begin with the raw amino-acid sequence, 426 residues long: Serine--tRNA ligase (426 aa).

An L-serine-binding site is contributed by 231–233 (TSE). 262-264 (RSE) contributes to the ATP binding site. Glu-285 contacts L-serine. 349 to 352 (EISS) is an ATP binding site. Residue Ser-385 coordinates L-serine.

Belongs to the class-II aminoacyl-tRNA synthetase family. Type-1 seryl-tRNA synthetase subfamily. Homodimer. The tRNA molecule binds across the dimer.

The protein resides in the cytoplasm. It catalyses the reaction tRNA(Ser) + L-serine + ATP = L-seryl-tRNA(Ser) + AMP + diphosphate + H(+). The enzyme catalyses tRNA(Sec) + L-serine + ATP = L-seryl-tRNA(Sec) + AMP + diphosphate + H(+). Its pathway is aminoacyl-tRNA biosynthesis; selenocysteinyl-tRNA(Sec) biosynthesis; L-seryl-tRNA(Sec) from L-serine and tRNA(Sec): step 1/1. In terms of biological role, catalyzes the attachment of serine to tRNA(Ser). Is also able to aminoacylate tRNA(Sec) with serine, to form the misacylated tRNA L-seryl-tRNA(Sec), which will be further converted into selenocysteinyl-tRNA(Sec). The polypeptide is Serine--tRNA ligase (Legionella pneumophila subsp. pneumophila (strain Philadelphia 1 / ATCC 33152 / DSM 7513)).